A 332-amino-acid polypeptide reads, in one-letter code: Glycerol-3-phosphate dehydrogenase [NAD(P)+] (332 aa).

NADPH-binding residues include Ser11, Trp12, Arg32, Arg33, and Lys106. Positions 106 and 136 each coordinate sn-glycerol 3-phosphate. Residue Ala140 participates in NADPH binding. The sn-glycerol 3-phosphate site is built by Lys191, Asp244, Ser254, Arg255, and Asn256. Lys191 (proton acceptor) is an active-site residue. NADPH is bound at residue Arg255. Residues Val280 and Glu282 each coordinate NADPH.

Belongs to the NAD-dependent glycerol-3-phosphate dehydrogenase family.

It is found in the cytoplasm. The enzyme catalyses sn-glycerol 3-phosphate + NAD(+) = dihydroxyacetone phosphate + NADH + H(+). It carries out the reaction sn-glycerol 3-phosphate + NADP(+) = dihydroxyacetone phosphate + NADPH + H(+). It functions in the pathway membrane lipid metabolism; glycerophospholipid metabolism. Functionally, catalyzes the reduction of the glycolytic intermediate dihydroxyacetone phosphate (DHAP) to sn-glycerol 3-phosphate (G3P), the key precursor for phospholipid synthesis. The polypeptide is Glycerol-3-phosphate dehydrogenase [NAD(P)+] (Corynebacterium aurimucosum (strain ATCC 700975 / DSM 44827 / CIP 107346 / CN-1) (Corynebacterium nigricans)).